Reading from the N-terminus, the 102-residue chain is CRISPR-associated endoribonuclease Cas2 (102 aa).

Position 8 (Asp-8) interacts with Mg(2+).

Belongs to the CRISPR-associated endoribonuclease Cas2 protein family. In terms of assembly, homodimer, forms a heterotetramer with a Cas1 homodimer. Mg(2+) serves as cofactor.

Its function is as follows. CRISPR (clustered regularly interspaced short palindromic repeat), is an adaptive immune system that provides protection against mobile genetic elements (viruses, transposable elements and conjugative plasmids). CRISPR clusters contain sequences complementary to antecedent mobile elements and target invading nucleic acids. CRISPR clusters are transcribed and processed into CRISPR RNA (crRNA). Functions as a ssRNA-specific endoribonuclease. Involved in the integration of spacer DNA into the CRISPR cassette. The sequence is that of CRISPR-associated endoribonuclease Cas2 from Acidovorax ebreus (strain TPSY) (Diaphorobacter sp. (strain TPSY)).